The sequence spans 369 residues: Melanoma-associated antigen 10 (369 aa).

The segment at 1 to 131 (MPRAPKRQRC…VLPDSESLPR (131 aa)) is disordered. Over residues 39-62 (SSSTSTSSSFPSSFPSSSSSSSSS) the composition is skewed to low complexity. 2 stretches are compositionally biased toward polar residues: residues 85–96 (QSAQIACSSPSV) and 107–121 (EGSSSQKEESPSTLQ). In terms of domain architecture, MAGE spans 134-333 (IDEKVTDLVQ…RSFPLWYEEA (200 aa)). The interval 340–369 (RAQDRIATTDDTTAMASASSSATGSFSYPE) is disordered. Over residues 348–369 (TDDTTAMASASSSATGSFSYPE) the composition is skewed to low complexity.

Expressed in many tumors of several types, such as melanoma, head and neck squamous cell carcinoma, lung carcinoma and breast carcinoma, but not in normal tissues except for spermatogonia, spermatocytes and placenta.

It localises to the nucleus. Functionally, not known, though may play a role in embryonal development and tumor transformation or aspects of tumor progression. The sequence is that of Melanoma-associated antigen 10 (MAGEA10) from Homo sapiens (Human).